The chain runs to 83 residues: MGSFSIWHWLIVLLIVVMVFGTKKLKNMGSDLGSAVKGFKDGMKDGGQSAAATDDKPAAPAGQVTNAQASDKTTIDVEARQKS.

A helical transmembrane segment spans residues 1–21; the sequence is MGSFSIWHWLIVLLIVVMVFG. A disordered region spans residues 44–83; that stretch reads KDGGQSAAATDDKPAAPAGQVTNAQASDKTTIDVEARQKS. Polar residues predominate over residues 63 to 72; that stretch reads QVTNAQASDK. Residues 73-83 show a composition bias toward basic and acidic residues; the sequence is TTIDVEARQKS.

It belongs to the TatA/E family. As to quaternary structure, the Tat system comprises two distinct complexes: a TatABC complex, containing multiple copies of TatA, TatB and TatC subunits, and a separate TatA complex, containing only TatA subunits. Substrates initially bind to the TatABC complex, which probably triggers association of the separate TatA complex to form the active translocon.

Its subcellular location is the cell inner membrane. Functionally, part of the twin-arginine translocation (Tat) system that transports large folded proteins containing a characteristic twin-arginine motif in their signal peptide across membranes. TatA could form the protein-conducting channel of the Tat system. This Polaromonas sp. (strain JS666 / ATCC BAA-500) protein is Sec-independent protein translocase protein TatA.